The primary structure comprises 342 residues: S-adenosylmethionine:tRNA ribosyltransferase-isomerase (342 aa).

The protein belongs to the QueA family. Monomer.

The protein resides in the cytoplasm. The enzyme catalyses 7-aminomethyl-7-carbaguanosine(34) in tRNA + S-adenosyl-L-methionine = epoxyqueuosine(34) in tRNA + adenine + L-methionine + 2 H(+). It participates in tRNA modification; tRNA-queuosine biosynthesis. Functionally, transfers and isomerizes the ribose moiety from AdoMet to the 7-aminomethyl group of 7-deazaguanine (preQ1-tRNA) to give epoxyqueuosine (oQ-tRNA). The protein is S-adenosylmethionine:tRNA ribosyltransferase-isomerase of Bacillus velezensis (strain DSM 23117 / BGSC 10A6 / LMG 26770 / FZB42) (Bacillus amyloliquefaciens subsp. plantarum).